A 693-amino-acid polypeptide reads, in one-letter code: Sister chromatid cohesion 1 protein 3 (693 aa).

4 disordered regions span residues 167-250 (IPMD…PGTV), 262-361 (DLSP…KNFD), 460-511 (PVSP…TFDN), and 545-573 (TQSGNWETESYRTEPSTSTVPEDLPGQRN). Composition is skewed to basic and acidic residues over residues 178-201 (VSRHTGEIDVETAHETGPDNEPRD) and 232-243 (TEERIPNSERND). Positions 264-277 (SPTSHPSFAAQQQD) are enriched in polar residues. Basic and acidic residues predominate over residues 278-295 (VRVERTESLDETLNEKEP). A compositionally biased stretch (low complexity) spans 316–325 (RSGSPGSAAG). Composition is skewed to polar residues over residues 465-483 (PDSTNPDSTVQLSPAQQTE) and 545-564 (TQSGNWETESYRTEPSTSTV).

The protein belongs to the rad21 family. Component of the cohesin complex. Low expression in shoots, buds, siliques, leaves and roots. Found in, but not limited to, actively dividing cells: in procambium, protoderm and ground meristem in roots, and in shoot and floral meristems.

It is found in the nucleus. Its function is as follows. May be involved in sister chromatid cohesion during mitosis. In Arabidopsis thaliana (Mouse-ear cress), this protein is Sister chromatid cohesion 1 protein 3 (SYN3).